The primary structure comprises 367 residues: UDP-N-acetylglucosamine--N-acetylmuramyl-(pentapeptide) pyrophosphoryl-undecaprenol N-acetylglucosamine transferase (367 aa).

UDP-N-acetyl-alpha-D-glucosamine-binding positions include 15–17 (TGG), N126, R169, S197, and Q298.

The protein belongs to the glycosyltransferase 28 family. MurG subfamily.

It is found in the cell inner membrane. The enzyme catalyses di-trans,octa-cis-undecaprenyl diphospho-N-acetyl-alpha-D-muramoyl-L-alanyl-D-glutamyl-meso-2,6-diaminopimeloyl-D-alanyl-D-alanine + UDP-N-acetyl-alpha-D-glucosamine = di-trans,octa-cis-undecaprenyl diphospho-[N-acetyl-alpha-D-glucosaminyl-(1-&gt;4)]-N-acetyl-alpha-D-muramoyl-L-alanyl-D-glutamyl-meso-2,6-diaminopimeloyl-D-alanyl-D-alanine + UDP + H(+). It functions in the pathway cell wall biogenesis; peptidoglycan biosynthesis. In terms of biological role, cell wall formation. Catalyzes the transfer of a GlcNAc subunit on undecaprenyl-pyrophosphoryl-MurNAc-pentapeptide (lipid intermediate I) to form undecaprenyl-pyrophosphoryl-MurNAc-(pentapeptide)GlcNAc (lipid intermediate II). The protein is UDP-N-acetylglucosamine--N-acetylmuramyl-(pentapeptide) pyrophosphoryl-undecaprenol N-acetylglucosamine transferase of Bradyrhizobium sp. (strain ORS 278).